Here is a 356-residue protein sequence, read N- to C-terminus: Guanine nucleotide-binding protein alpha-3 subunit (356 aa).

The disordered stretch occupies residues 1 to 26; that stretch reads MGACMSKNDEETEQKKRSQKIDRDLE. Residue glycine 2 is the site of N-myristoyl glycine attachment. The S-palmitoyl cysteine moiety is linked to residue cysteine 4. The span at 7–23 shows a compositional bias: basic and acidic residues; it reads KNDEETEQKKRSQKIDR. The region spanning 34–356 is the G-alpha domain; it reads KECKILLLGS…NNALKDSGIL (323 aa). The segment at 37–50 is G1 motif; it reads KILLLGSGESGKST. Residues 42–49, 179–185, 204–208, 273–276, and alanine 328 each bind GTP; these read GSGESGKS, LRARTKT, DVGGQ, and NKVD. Mg(2+) is bound by residues serine 49 and threonine 185. Residues 177–185 form a G2 motif region; that stretch reads DVLRARTKT. The tract at residues 200 to 209 is G3 motif; it reads IHMFDVGGQR. A G4 motif region spans residues 269-276; sequence ILFLNKVD. The G5 motif stretch occupies residues 326–331; the sequence is TQATDT.

Belongs to the G-alpha family. G(q) subfamily. In terms of assembly, g proteins are composed of 3 units; alpha, beta and gamma. The alpha chain contains the guanine nucleotide binding site.

Functionally, guanine nucleotide-binding proteins (G proteins) are involved as modulators or transducers in various transmembrane signaling systems. Involved in conidiation. In Neurospora crassa (strain ATCC 24698 / 74-OR23-1A / CBS 708.71 / DSM 1257 / FGSC 987), this protein is Guanine nucleotide-binding protein alpha-3 subunit (gna-3).